Consider the following 261-residue polypeptide: Proline-rich protein HaeIII subfamily 1 (261 aa).

Positions 1-15 are cleaved as a signal peptide; that stretch reads MLVVLFTVALLALSS. The tract at residues 15–261 is disordered; it reads SAQGPREENQ…PPQGRPQGPR (247 aa). Composition is skewed to pro residues over residues 32–44 and 51–237; these read QRPP…PRPP and GPPP…PPTG. Low complexity predominate over residues 238 to 261; it reads GPQQTPPLAGNTQGPPQGRPQGPR.

The protein resides in the secreted. The chain is Proline-rich protein HaeIII subfamily 1 (Prh1) from Mus musculus (Mouse).